We begin with the raw amino-acid sequence, 124 residues long: Small ribosomal subunit protein uS12 (124 aa).

Residues 1–28 (MPTINQLVRKGRTPKVSKTKAPALKGSP) form a disordered region. The segment covering 9 to 18 (RKGRTPKVSK) has biased composition (basic residues). At aspartate 89 the chain carries 3-methylthioaspartic acid.

This sequence belongs to the universal ribosomal protein uS12 family. As to quaternary structure, part of the 30S ribosomal subunit. Contacts proteins S8 and S17. May interact with IF1 in the 30S initiation complex.

With S4 and S5 plays an important role in translational accuracy. Its function is as follows. Interacts with and stabilizes bases of the 16S rRNA that are involved in tRNA selection in the A site and with the mRNA backbone. Located at the interface of the 30S and 50S subunits, it traverses the body of the 30S subunit contacting proteins on the other side and probably holding the rRNA structure together. The combined cluster of proteins S8, S12 and S17 appears to hold together the shoulder and platform of the 30S subunit. The sequence is that of Small ribosomal subunit protein uS12 from Paenarthrobacter aurescens (strain TC1).